A 635-amino-acid polypeptide reads, in one-letter code: Chaperone protein HtpG (635 aa).

The a; substrate-binding stretch occupies residues 1 to 336 (MTTAEAAAPE…SADLPLNLSR (336 aa)). A b region spans residues 337–556 (EMLQDSAILA…ESGIDRRLEK (220 aa)). A c region spans residues 557–635 (LLASAGRLGD…RVMQRGLPTA (79 aa)).

Belongs to the heat shock protein 90 family. Homodimer.

Its subcellular location is the cytoplasm. Its function is as follows. Molecular chaperone. Has ATPase activity. The protein is Chaperone protein HtpG of Azorhizobium caulinodans (strain ATCC 43989 / DSM 5975 / JCM 20966 / LMG 6465 / NBRC 14845 / NCIMB 13405 / ORS 571).